Here is a 608-residue protein sequence, read N- to C-terminus: 2',5'-phosphodiesterase 12 (608 aa).

Residues 1–16 (MWRLPGRSALRGVRSV) constitute a mitochondrion transit peptide. The segment covering 90 to 99 (AAKKSRKNRA) has biased composition (basic residues). Residues 90-111 (AAKKSRKNRAHSSGGAACEATG) are disordered. Ser216 carries the phosphoserine modification. 3 residues coordinate Mg(2+): Glu350, Asp495, and Asn497. Asp495 acts as the Proton donor/acceptor in catalysis.

It belongs to the CCR4/nocturin family. Requires Mg(2+) as cofactor.

The protein resides in the mitochondrion matrix. The catalysed reaction is Exonucleolytic cleavage of poly(A) to 5'-AMP.. Functionally, enzyme that cleaves 2',5'-phosphodiester bond linking adenosines of the 5'-triphosphorylated oligoadenylates, triphosphorylated oligoadenylates referred as 2-5A modulates the 2-5A system. Degrades triphosphorylated 2-5A to produce AMP and ATP. Also cleaves 3',5'-phosphodiester bond of oligoadenylates. Plays a role as a negative regulator of the 2-5A system that is one of the major pathways for antiviral and antitumor functions induced by interferons (IFNs). Suppression of this enzyme increases cellular 2-5A levels and decreases viral replication in cultured small-airway epithelial cells. This is 2',5'-phosphodiesterase 12 (Pde12) from Mus musculus (Mouse).